A 333-amino-acid chain; its full sequence is UDP-glucose 4-epimerase (333 aa).

Residues 11–12, 32–37, 52–53, 75–79, asparagine 94, threonine 119, tyrosine 143, lysine 147, and phenylalanine 171 contribute to the NAD(+) site; these read YI, DSLVTG, DL, and FAAYS. The substrate site is built by threonine 119 and tyrosine 143. The active-site Proton acceptor is tyrosine 143. Substrate is bound by residues asparagine 172, 191–192, 208–210, arginine 223, and 284–287; these read HL, MIF, and RSGD.

The protein belongs to the NAD(P)-dependent epimerase/dehydratase family. Homodimer. The cofactor is NAD(+).

It catalyses the reaction UDP-alpha-D-glucose = UDP-alpha-D-galactose. It functions in the pathway carbohydrate metabolism; galactose metabolism. Functionally, involved in the metabolism of galactose. Catalyzes the conversion of UDP-galactose (UDP-Gal) to UDP-glucose (UDP-Glc) through a mechanism involving the transient reduction of NAD. This is UDP-glucose 4-epimerase (galE) from Streptococcus mutans serotype c (strain ATCC 700610 / UA159).